Consider the following 242-residue polypeptide: Succinyl-CoA:3-ketoacid coenzyme A transferase subunit A (242 aa).

33–39 (GGFGLCG) is a CoA binding site.

Belongs to the 3-oxoacid CoA-transferase subunit A family. Heterodimer of a subunit A and a subunit B.

The enzyme catalyses a 3-oxo acid + succinyl-CoA = a 3-oxoacyl-CoA + succinate. The protein operates within bacterial outer membrane biogenesis; lipopolysaccharide biosynthesis. The sequence is that of Succinyl-CoA:3-ketoacid coenzyme A transferase subunit A (lpsI) from Xanthomonas campestris pv. campestris (strain B100).